We begin with the raw amino-acid sequence, 201 residues long: Lipopolysaccharide core heptose(II)-phosphate phosphatase (201 aa).

An N-terminal signal peptide occupies residues 1-35 (MLAFTLRFIKNKRYLATLAGALVIIAGLTSQHAWS).

The protein belongs to the phosphoglycerate mutase family. Ais subfamily.

It localises to the periplasm. It participates in bacterial outer membrane biogenesis; lipopolysaccharide metabolism. Catalyzes the dephosphorylation of heptose(II) of the outer membrane lipopolysaccharide core. The protein is Lipopolysaccharide core heptose(II)-phosphate phosphatase of Salmonella heidelberg (strain SL476).